The primary structure comprises 326 residues: MNWEVVKLRLNMALATLGIVLLGFALALAVADYAFGAQFGVGLMLSILMFIFFLNIIQWLFGPYMINWAYRTVEVTPTDPVYGWLYSTVAEVAKYNGFRDVPKVYIADVPFPNAFAYGSPIAGKRIAFTLPILKLLNRDEIMAVAGHELGHLKHRDVELLMAVGLIPALIYYLGWWIFWGGMFGGGGGNGRGNNGGLLFLIGIAMMAVSFVFQLLVLSINRMREAYADVNSALTVPGGKENLQLALAKLTLSMDPGALEKFKKKSTTNQMASMLFFTNAIEEVPTWNARELVEIWKTTKVPWYAEIFMDHPHPAKRIQLLEKVSKY.

The next 2 helical transmembrane spans lie at Leu-10 to Val-30 and Val-41 to Phe-61. His-147 provides a ligand contact to Zn(2+). The active site involves Glu-148. A Zn(2+)-binding site is contributed by His-151. Transmembrane regions (helical) follow at residues Leu-159–Trp-179 and Leu-197–Leu-217. A Zn(2+)-binding site is contributed by Glu-224.

This sequence belongs to the peptidase M48B family. Zn(2+) serves as cofactor.

It localises to the cell membrane. The protein is Protease HtpX homolog of Saccharolobus islandicus (strain Y.N.15.51 / Yellowstone #2) (Sulfolobus islandicus).